Consider the following 239-residue polypeptide: Putative CRISPR-associated endoribonuclease-like protein Cas6nc (239 aa).

It belongs to the CRISPR-associated protein Cas6/Cse3/CasE family. As to quaternary structure, monomer; homodimer when crystallized in the presence of crRNA. Varying the crRNA sequence varies degree of oligomerization and structure.

In terms of biological role, CRISPR (clustered regularly interspaced short palindromic repeat), is an adaptive immune system that provides protection against mobile genetic elements (viruses, transposable elements and conjugative plasmids). CRISPR clusters contain sequences complementary to antecedent mobile elements and target invading nucleic acids. CRISPR clusters are transcribed and processed into CRISPR RNA (crRNA), also called psiRNA (prokaryotic silencing) in this organism (Potential). The chain is Putative CRISPR-associated endoribonuclease-like protein Cas6nc (cas6nc) from Pyrococcus horikoshii (strain ATCC 700860 / DSM 12428 / JCM 9974 / NBRC 100139 / OT-3).